We begin with the raw amino-acid sequence, 138 residues long: Large ribosomal subunit protein bL19 (138 aa).

The protein belongs to the bacterial ribosomal protein bL19 family.

Its function is as follows. This protein is located at the 30S-50S ribosomal subunit interface and may play a role in the structure and function of the aminoacyl-tRNA binding site. This chain is Large ribosomal subunit protein bL19 (rplS), found in Rickettsia prowazekii (strain Madrid E).